We begin with the raw amino-acid sequence, 449 residues long: Telomere resolvase ResT (449 aa).

Requires No cofactors were found to be necessary. as cofactor.

The protein localises to the cytoplasm. It localises to the nucleoid. Functionally, catalyzes the conservative, sequence-specific DNA breakage and reunion reaction that generates two hairpin telomeres from a replicated telomere substrate. Breaks two phosphodiester bonds in a single DNA duplex and joins each end with the opposite DNA strand to form covalently closed hairpin telomeres. In vitro relaxed-circular, open-circular and linearized plasmids, but not supercoiled DNA, are all substrates. Cleavage is position-dependent relative to conserved sequence elements. This chain is Telomere resolvase ResT, found in Borreliella burgdorferi (strain ATCC 35210 / DSM 4680 / CIP 102532 / B31) (Borrelia burgdorferi).